The primary structure comprises 431 residues: Glucose-1-phosphate adenylyltransferase (431 aa).

Alpha-D-glucose 1-phosphate contacts are provided by residues Tyr-109, Gly-175, Glu-190 to Lys-191, and Ser-208.

It belongs to the bacterial/plant glucose-1-phosphate adenylyltransferase family. In terms of assembly, homotetramer.

The catalysed reaction is alpha-D-glucose 1-phosphate + ATP + H(+) = ADP-alpha-D-glucose + diphosphate. It functions in the pathway glycan biosynthesis; glycogen biosynthesis. Its function is as follows. Involved in the biosynthesis of ADP-glucose, a building block required for the elongation reactions to produce glycogen. Catalyzes the reaction between ATP and alpha-D-glucose 1-phosphate (G1P) to produce pyrophosphate and ADP-Glc. This is Glucose-1-phosphate adenylyltransferase from Alteromonas mediterranea (strain DSM 17117 / CIP 110805 / LMG 28347 / Deep ecotype).